Consider the following 636-residue polypeptide: Threonine--tRNA ligase (636 aa).

The TGS domain maps to 1–61 (MINITLPDDS…RNDCAVRLIT (61 aa)). The tract at residues 238–528 (DHRKIGTRMG…LVEHFAGKFP (291 aa)) is catalytic. Zn(2+) contacts are provided by Cys-329, His-380, and His-505.

This sequence belongs to the class-II aminoacyl-tRNA synthetase family. Homodimer. Requires Zn(2+) as cofactor.

Its subcellular location is the cytoplasm. It carries out the reaction tRNA(Thr) + L-threonine + ATP = L-threonyl-tRNA(Thr) + AMP + diphosphate + H(+). Its function is as follows. Catalyzes the attachment of threonine to tRNA(Thr) in a two-step reaction: L-threonine is first activated by ATP to form Thr-AMP and then transferred to the acceptor end of tRNA(Thr). Also edits incorrectly charged L-seryl-tRNA(Thr). The sequence is that of Threonine--tRNA ligase from Desulforapulum autotrophicum (strain ATCC 43914 / DSM 3382 / VKM B-1955 / HRM2) (Desulfobacterium autotrophicum).